The primary structure comprises 396 residues: MSIASNSTVIILGSTGSIGTQGLDVISRHPERFTVTGLAAGGAHIELLAQQAAQFHVSEVAVFDETKVPALQAALAQAGAQGVRVTGGPDSVIAMAGSGANVVLNGITGSIGLEPSIAALKAGSQLALANKESVVAGGHLLFSAQVRENQINPVDSEHSAIWQSLRSGTHAEVAKLVVTASGGPFRGWKRADMENITPEQALHHPTWNMGPVVTINSSTLMNKGLEVIEASRLFNVPPERIDVTVHPQSIVHSMVEFVDGATICQASPPDMRLPIALGLSAPDRMTNVAAACDWTQAATWTFEPLDDEAFPAVQLARHCLAASEKHTAVLNAANEQAVHAFLEHRLPYLGIVDTVKAVLDQMDAELRGNPLFTDVEEMNQLELEARRRADDLINKQ.

NADPH contacts are provided by Thr15, Gly16, Ser17, Ile18, Gly41, and Asn130. Lys131 serves as a coordination point for 1-deoxy-D-xylulose 5-phosphate. Glu132 is a binding site for NADPH. Residue Asp155 participates in Mn(2+) binding. Residues Ser156, Glu157, Ser181, and His204 each coordinate 1-deoxy-D-xylulose 5-phosphate. Glu157 is a binding site for Mn(2+). Gly210 serves as a coordination point for NADPH. Residues Ser217, Asn222, Lys223, and Glu226 each contribute to the 1-deoxy-D-xylulose 5-phosphate site. Residue Glu226 coordinates Mn(2+).

This sequence belongs to the DXR family. Requires Mg(2+) as cofactor. It depends on Mn(2+) as a cofactor.

It catalyses the reaction 2-C-methyl-D-erythritol 4-phosphate + NADP(+) = 1-deoxy-D-xylulose 5-phosphate + NADPH + H(+). Its pathway is isoprenoid biosynthesis; isopentenyl diphosphate biosynthesis via DXP pathway; isopentenyl diphosphate from 1-deoxy-D-xylulose 5-phosphate: step 1/6. In terms of biological role, catalyzes the NADPH-dependent rearrangement and reduction of 1-deoxy-D-xylulose-5-phosphate (DXP) to 2-C-methyl-D-erythritol 4-phosphate (MEP). This Bifidobacterium longum (strain NCC 2705) protein is 1-deoxy-D-xylulose 5-phosphate reductoisomerase.